A 568-amino-acid polypeptide reads, in one-letter code: Periplasmic trehalase (568 aa).

The signal sequence occupies residues 1–38 (MPHAPARSGDAMSAAAPPCCTSLLGLSLSMFVAPCALA). Substrate contacts are provided by residues Arg169, 176–177 (WD), Asn213, 222–224 (RSQ), 294–296 (RPE), and Gly327. Active-site proton donor/acceptor residues include Asp329 and Glu511. Glu526 is a substrate binding site.

This sequence belongs to the glycosyl hydrolase 37 family.

Its subcellular location is the periplasm. It carries out the reaction alpha,alpha-trehalose + H2O = alpha-D-glucose + beta-D-glucose. In terms of biological role, provides the cells with the ability to utilize trehalose at high osmolarity by splitting it into glucose molecules that can subsequently be taken up by the phosphotransferase-mediated uptake system. This chain is Periplasmic trehalase, found in Xanthomonas campestris pv. campestris (strain 8004).